A 224-amino-acid polypeptide reads, in one-letter code: Ribonuclease 3 (224 aa).

In terms of domain architecture, RNase III spans 4–127; the sequence is IEKLERSLTY…IIGAIHLEAG (124 aa). E40 is a Mg(2+) binding site. Residue D44 is part of the active site. Mg(2+)-binding residues include D113 and E116. The active site involves E116. The DRBM domain occupies 154–223; that stretch reads DYKTKLQEIT…AKIALEKLGA (70 aa).

It belongs to the ribonuclease III family. As to quaternary structure, homodimer. Requires Mg(2+) as cofactor.

The protein localises to the cytoplasm. The enzyme catalyses Endonucleolytic cleavage to 5'-phosphomonoester.. Digests double-stranded RNA. Involved in the processing of primary rRNA transcript to yield the immediate precursors to the large and small rRNAs (23S and 16S). Processes some mRNAs, and tRNAs when they are encoded in the rRNA operon. Processes pre-crRNA and tracrRNA of type II CRISPR loci if present in the organism. This chain is Ribonuclease 3, found in Campylobacter jejuni (strain RM1221).